The chain runs to 384 residues: Dual-specificity RNA methyltransferase RlmN (384 aa).

Residue glutamate 105 is the Proton acceptor of the active site. Residues 111-350 (EDDRATLCVS…TIVRKTRGDD (240 aa)) form the Radical SAM core domain. An intrachain disulfide couples cysteine 118 to cysteine 355. [4Fe-4S] cluster contacts are provided by cysteine 125, cysteine 129, and cysteine 132. Residues 179-180 (GE), serine 211, 233-235 (SLH), and asparagine 312 each bind S-adenosyl-L-methionine. The active-site S-methylcysteine intermediate is the cysteine 355.

Belongs to the radical SAM superfamily. RlmN family. [4Fe-4S] cluster serves as cofactor.

The protein localises to the cytoplasm. It carries out the reaction adenosine(2503) in 23S rRNA + 2 reduced [2Fe-2S]-[ferredoxin] + 2 S-adenosyl-L-methionine = 2-methyladenosine(2503) in 23S rRNA + 5'-deoxyadenosine + L-methionine + 2 oxidized [2Fe-2S]-[ferredoxin] + S-adenosyl-L-homocysteine. It catalyses the reaction adenosine(37) in tRNA + 2 reduced [2Fe-2S]-[ferredoxin] + 2 S-adenosyl-L-methionine = 2-methyladenosine(37) in tRNA + 5'-deoxyadenosine + L-methionine + 2 oxidized [2Fe-2S]-[ferredoxin] + S-adenosyl-L-homocysteine. Its function is as follows. Specifically methylates position 2 of adenine 2503 in 23S rRNA and position 2 of adenine 37 in tRNAs. m2A2503 modification seems to play a crucial role in the proofreading step occurring at the peptidyl transferase center and thus would serve to optimize ribosomal fidelity. This Escherichia coli O6:H1 (strain CFT073 / ATCC 700928 / UPEC) protein is Dual-specificity RNA methyltransferase RlmN.